Consider the following 383-residue polypeptide: Aquaporin-5 (383 aa).

Over 1 to 46 the chain is Cytoplasmic; sequence MSVTTLNGQPTLNISGPGQTALSRLDPLKKVFTKFFSSIPQKVRGH. A helical transmembrane segment spans residues 47–67; it reads VVAVIGELIGTTAFLFIAFSA. Residues 68-93 lie on the Extracellular side of the membrane; that stretch reads AEVALASANDNKGDKVSYETKSISTT. Residues 94–114 traverse the membrane as a helical segment; the sequence is QILFIAFGAGISLVVNAWTFF. Residue Arg-115 is a topological domain, cytoplasmic. The chain crosses the membrane as a helical span at residues 116–136; that stretch reads ISGGLFDPAVSIALFFVGAID. Positions 122-124 match the NPA 1 motif; sequence DPA. Residues 137-140 lie on the Extracellular side of the membrane; it reads LTRC. A helical membrane pass occupies residues 141 to 161; that stretch reads VLLCIAQCLGAIAASAMAYGL. At 162-180 the chain is on the cytoplasmic side; it reads YHGGLHTATTLKPGMSPAQ. The chain crosses the membrane as a helical span at residues 181–201; the sequence is GVIVEMILTCQLCFTVLMLAA. Residues 202 to 207 lie on the Extracellular side of the membrane; sequence EKHEAT. The helical transmembrane segment at 208 to 228 threads the bilayer; that stretch reads FLAPLGIGLSVFIGELAGVFW. Topologically, residues 229 to 252 are cytoplasmic; the sequence is TGGSMNPARSLGPAVVTLSFPSYH. Positions 234–236 match the NPA 2 motif; that stretch reads NPA. Residues 253-273 traverse the membrane as a helical segment; that stretch reads WIYWVGPIAGAGLASIIYKLI. Over 274–383 the chain is Extracellular; sequence KALEYETAQL…DGFFGEMYAD (110 aa). The span at 332-349 shows a compositional bias: polar residues; the sequence is ARKSSSLVPTKSTKSGNS. The tract at residues 332-383 is disordered; sequence ARKSSSLVPTKSTKSGNSEVKKTETVVEEPAKTQPKPAPAADDGFFGEMYAD. The span at 350–362 shows a compositional bias: basic and acidic residues; the sequence is EVKKTETVVEEPA. Over residues 363 to 372 the composition is skewed to low complexity; it reads KTQPKPAPAA.

Belongs to the MIP/aquaporin (TC 1.A.8) family.

Its subcellular location is the membrane. The catalysed reaction is H2O(in) = H2O(out). Water channel required to facilitate the transport of water across membranes. May play a role in the vegetative growth. The polypeptide is Aquaporin-5 (Botryotinia fuckeliana (strain B05.10) (Noble rot fungus)).